Here is a 175-residue protein sequence, read N- to C-terminus: Vesicle-associated membrane protein-associated protein SCS22 (175 aa).

In terms of domain architecture, MSP spans 1-125; it reads MRIVPEKLVF…DDIVFKKIKI (125 aa). Residues 1 to 154 are Cytoplasmic-facing; the sequence is MRIVPEKLVF…RAPSAGNGQS (154 aa). Residues 133-152 form a disordered region; sequence RKPSGNHDAESARAPSAGNG. The chain crosses the membrane as a helical; Anchor for type IV membrane protein span at residues 155–175; that stretch reads LSSRALLIITVIALLVGWIYY.

This sequence belongs to the VAMP-associated protein (VAP) (TC 9.B.17) family.

The protein resides in the membrane. Its function is as follows. Targets proteins containing a FFAT motif to membranes. Involved in regulation of phospholipid metabolism. The protein is Vesicle-associated membrane protein-associated protein SCS22 (SCS22) of Saccharomyces cerevisiae (strain ATCC 204508 / S288c) (Baker's yeast).